Consider the following 301-residue polypeptide: MTTLDDKLLGEKLQYYYSSSEDEDSDHEDKDRGRCAPASSSVPAEAELAGEGISVNTGPKGVINDWRRFKQLETEQREEQCREMERLIKKLSMTCRSHLDEEEEQQKQKDLQEKISGKMTLKEFAIMNEDQDDEEFLQQYRKQRMEEMRQQLHKGPQFKQVFEISSGEGFLDMIDKEQKSIVIMVHIYEDGIPGTEAMNGCMICLAAEYPAVKFCKVKSSVIGASSQFTRNALPALLIYKGGELIGNFVRVTDQLGDDFFAVDLEAFLQEFGLLPEKEVLVLTSVRNSATCHSEDSDLEID.

Thr2 carries the N-acetylthreonine modification. The segment at 18–57 (SSSEDEDSDHEDKDRGRCAPASSSVPAEAELAGEGISVNT) is disordered. 2 positions are modified to phosphoserine: Ser20 and Ser25. Positions 36 to 49 (APASSSVPAEAELA) are enriched in low complexity. One can recognise a Phosducin domain in the interval 36–299 (APASSSVPAE…TCHSEDSDLE (264 aa)). Residues Ser226, Ser293, and Ser296 each carry the phosphoserine modification.

The protein belongs to the phosducin family. In terms of assembly, forms a complex with the beta and gamma subunits of the GTP-binding protein, transducin. Interacts with the CCT chaperonin complex.

It localises to the cell projection. The protein resides in the cilium. Acts as a positive regulator of hedgehog signaling and regulates ciliary function. In terms of biological role, functions as a co-chaperone for CCT in the assembly of heterotrimeric G protein complexes, facilitates the assembly of both Gbeta-Ggamma and RGS-Gbeta5 heterodimers. Functionally, acts as a negative regulator of heterotrimeric G proteins assembly by trapping the preloaded G beta subunits inside the CCT chaperonin. This chain is Phosducin-like protein (PDCL), found in Homo sapiens (Human).